The sequence spans 347 residues: NADH-ubiquinone oxidoreductase chain 2 (347 aa).

A run of 10 helical transmembrane segments spans residues 3 to 23 (PLILIMIMLTVILGTTIVMMS), 25 to 45 (HWLMIWMGFEMNMLAVIPLLM), 59 to 79 (YFLTQATASMLLMLAIIINLL), 96 to 116 (IIMTLAMAMKMGLAPLHFWVP), 148 to 170 (GINLDLILLMSMMSIAIGGWGGL), 178 to 198 (ILAYSSIAHMGWMASILAFNP), 200 to 220 (MTLLNLLLYILMTTTTFMLFM), 247 to 267 (IMLSLGGLPPLVGFLPKWMII), 276 to 296 (ITLATLMAITALLNLFFYMRL), and 326 to 346 (LPMLIILSTITLPLAPAITLL).

It belongs to the complex I subunit 2 family. As to quaternary structure, core subunit of respiratory chain NADH dehydrogenase (Complex I) which is composed of 45 different subunits. Interacts with TMEM242.

Its subcellular location is the mitochondrion inner membrane. It catalyses the reaction a ubiquinone + NADH + 5 H(+)(in) = a ubiquinol + NAD(+) + 4 H(+)(out). Its function is as follows. Core subunit of the mitochondrial membrane respiratory chain NADH dehydrogenase (Complex I) which catalyzes electron transfer from NADH through the respiratory chain, using ubiquinone as an electron acceptor. Essential for the catalytic activity and assembly of complex I. The protein is NADH-ubiquinone oxidoreductase chain 2 of Saccopteryx leptura (Lesser sac-winged bat).